The sequence spans 379 residues: Homoserine O-succinyltransferase (379 aa).

One can recognise an AB hydrolase-1 domain in the interval 51–360 (NAVLICHALS…DSPYGHDAFL (310 aa)). Ser-157 (nucleophile) is an active-site residue. Position 227 (Arg-227) interacts with substrate. Catalysis depends on residues Asp-323 and His-356. Substrate is bound at residue Asp-357.

The protein belongs to the AB hydrolase superfamily. MetX family. In terms of assembly, homodimer.

Its subcellular location is the cytoplasm. The enzyme catalyses L-homoserine + succinyl-CoA = O-succinyl-L-homoserine + CoA. It participates in amino-acid biosynthesis; L-methionine biosynthesis via de novo pathway; O-succinyl-L-homoserine from L-homoserine: step 1/1. Its function is as follows. Transfers a succinyl group from succinyl-CoA to L-homoserine, forming succinyl-L-homoserine. The chain is Homoserine O-succinyltransferase from Pseudomonas putida (strain ATCC 700007 / DSM 6899 / JCM 31910 / BCRC 17059 / LMG 24140 / F1).